Here is a 310-residue protein sequence, read N- to C-terminus: tRNA methyltransferase 10 homolog B (310 aa).

Residues 55–94 (RKQRNWERRLEVKKSKRKEEKLRKKLNRQDKDVSDAQLSK) adopt a coiled-coil conformation. An SAM-dependent MTase TRM10-type domain is found at 101-298 (TKERLEGARA…AGIPPGKGFV (198 aa)).

It belongs to the class IV-like SAM-binding methyltransferase superfamily. TRM10 family.

It catalyses the reaction guanosine(9) in tRNA + S-adenosyl-L-methionine = N(1)-methylguanosine(9) in tRNA + S-adenosyl-L-homocysteine + H(+). In terms of biological role, S-adenosyl-L-methionine-dependent guanine N(1)-methyltransferase that catalyzes the formation of N(1)-methylguanine at position 9 (m1G9) in tRNAs. Probably not able to catalyze formation of N(1)-methyladenine at position 9 (m1A9) in tRNAs. This chain is tRNA methyltransferase 10 homolog B (trmt10b), found in Danio rerio (Zebrafish).